Consider the following 560-residue polypeptide: Dihydroxy-acid dehydratase (560 aa).

Aspartate 78 lines the Mg(2+) pocket. Residue cysteine 119 coordinates [2Fe-2S] cluster. 2 residues coordinate Mg(2+): aspartate 120 and lysine 121. Lysine 121 is subject to N6-carboxylysine. Cysteine 192 is a binding site for [2Fe-2S] cluster. Residue glutamate 446 coordinates Mg(2+). Serine 472 functions as the Proton acceptor in the catalytic mechanism.

Belongs to the IlvD/Edd family. In terms of assembly, homodimer. [2Fe-2S] cluster is required as a cofactor. The cofactor is Mg(2+).

The catalysed reaction is (2R)-2,3-dihydroxy-3-methylbutanoate = 3-methyl-2-oxobutanoate + H2O. It catalyses the reaction (2R,3R)-2,3-dihydroxy-3-methylpentanoate = (S)-3-methyl-2-oxopentanoate + H2O. The protein operates within amino-acid biosynthesis; L-isoleucine biosynthesis; L-isoleucine from 2-oxobutanoate: step 3/4. It participates in amino-acid biosynthesis; L-valine biosynthesis; L-valine from pyruvate: step 3/4. In terms of biological role, functions in the biosynthesis of branched-chain amino acids. Catalyzes the dehydration of (2R,3R)-2,3-dihydroxy-3-methylpentanoate (2,3-dihydroxy-3-methylvalerate) into 2-oxo-3-methylpentanoate (2-oxo-3-methylvalerate) and of (2R)-2,3-dihydroxy-3-methylbutanoate (2,3-dihydroxyisovalerate) into 2-oxo-3-methylbutanoate (2-oxoisovalerate), the penultimate precursor to L-isoleucine and L-valine, respectively. This is Dihydroxy-acid dehydratase from Anaeromyxobacter dehalogenans (strain 2CP-1 / ATCC BAA-258).